Here is a 753-residue protein sequence, read N- to C-terminus: Probable tubulin--tyrosine ligase PBY1 (753 aa).

The TTL domain occupies 343-734 (MEYIYKPLTH…PIFNENRNKT (392 aa)).

The protein belongs to the tubulin--tyrosine ligase family. It depends on Mg(2+) as a cofactor. K(+) is required as a cofactor.

It is found in the cytoplasm. Its subcellular location is the P-body. It carries out the reaction C-terminal L-alpha-aminoacyl-L-glutamyl-L-glutamyl-[tubulin] + L-tyrosine + ATP = C-terminal L-alpha-aminoacyl-L-glutamyl-L-glutamyl-L-tyrosyl-[tubulin] + ADP + phosphate + H(+). In terms of biological role, probable P-body-associated tubulin--tyrosine ligase. In Saccharomyces cerevisiae (strain ATCC 204508 / S288c) (Baker's yeast), this protein is Probable tubulin--tyrosine ligase PBY1 (PBY1).